We begin with the raw amino-acid sequence, 314 residues long: Ketimine reductase mu-crystallin (314 aa).

Position 47 (arginine 47) interacts with 3,3',5-triiodo-L-thyronine. NADPH-binding residues include serine 91, histidine 92, arginine 119, alanine 144, valine 146, glutamine 147, asparagine 168, arginine 169, threonine 170, asparagine 173, threonine 205, and methionine 206. Residue glutamate 257 participates in 3,3',5-triiodo-L-thyronine binding. Serine 292 lines the NADPH pocket.

Belongs to the ornithine cyclodeaminase/mu-crystallin family. Homodimer. Binds the thyroid hormone triiodothyronine (T3); T3 binding inhibits enzymatic activity.

The protein localises to the cytoplasm. It catalyses the reaction L-pipecolate + NAD(+) = Delta(1)-piperideine-2-carboxylate + NADH + H(+). It carries out the reaction L-pipecolate + NADP(+) = Delta(1)-piperideine-2-carboxylate + NADPH + H(+). The enzyme catalyses L-proline + NADP(+) = 1-pyrroline-2-carboxylate + NADPH + H(+). The catalysed reaction is L-proline + NAD(+) = 1-pyrroline-2-carboxylate + NADH + H(+). It catalyses the reaction (3R)-1,4-thiomorpholine-3-carboxylate + NAD(+) = 3,4-dehydrothiomorpholine-3-carboxylate + NADH + 2 H(+). It carries out the reaction (3R)-1,4-thiomorpholine-3-carboxylate + NADP(+) = 3,4-dehydrothiomorpholine-3-carboxylate + NADPH + 2 H(+). The enzyme catalyses (S)-cystathionine ketimine + NADH + 2 H(+) = (3R,5S)-2,3,5,6,7-pentahydro-1,4-thiazepine-3,5-dicarboxylate + NAD(+). The catalysed reaction is (S)-cystathionine ketimine + NADPH + 2 H(+) = (3R,5S)-2,3,5,6,7-pentahydro-1,4-thiazepine-3,5-dicarboxylate + NADP(+). It catalyses the reaction (R)-lanthionine ketimine + NADPH + 2 H(+) = (3R,5R)-1,4-thiomorpholine-3,5-dicarboxylate + NADP(+). It carries out the reaction Delta(2)-thiazoline-2-carboxylate + NADPH + 2 H(+) = L-thiazolidine-2-carboxylate + NADP(+). Catalyzes the NAD(P)H-dependent reduction of imine double bonds of a number of cyclic ketimine substrates, including sulfur-containing cyclic ketimines. Under physiological conditions, it efficiently catalyzes delta(1)-piperideine-2-carboxylate (P2C) and delta(1)-pyrroline-2-carboxylate (Pyr2C) reduction, suggesting a central role in lysine and glutamate metabolism. Additional substrates are (S)-cystathionine ketimine (CysK), 3,4-dehydrothiomorpholine-3-carboxylate (AECK), and (R)-lanthionine ketimine (LK) that is reduced at very low rate compared to other substrates. Also catalyzes the NAD(P)H-dependent reduction of delta(2)-thiazoline-2-carboxylate (T2C). This is Ketimine reductase mu-crystallin (CRYM) from Bos taurus (Bovine).